The chain runs to 102 residues: Ribonuclease P protein component 1 (102 aa).

Belongs to the eukaryotic/archaeal RNase P protein component 1 family. As to quaternary structure, consists of a catalytic RNA component and at least 4-5 protein subunits.

Its subcellular location is the cytoplasm. The catalysed reaction is Endonucleolytic cleavage of RNA, removing 5'-extranucleotides from tRNA precursor.. Functionally, part of ribonuclease P, a protein complex that generates mature tRNA molecules by cleaving their 5'-ends. The sequence is that of Ribonuclease P protein component 1 from Archaeoglobus fulgidus (strain ATCC 49558 / DSM 4304 / JCM 9628 / NBRC 100126 / VC-16).